A 90-amino-acid polypeptide reads, in one-letter code: Barrier-to-autointegration factor B (90 aa).

It belongs to the BAF family. Homodimer. Interacts with nemp1a and nemp1b.

The protein localises to the nucleus. The protein resides in the chromosome. It is found in the nucleus envelope. Its subcellular location is the cytoplasm. Its function is as follows. Non-specific DNA-binding protein that plays key roles in mitotic nuclear reassembly, chromatin organization, DNA damage response, gene expression and intrinsic immunity against foreign DNA. Contains two non-specific double-stranded DNA (dsDNA)-binding sites which promote DNA cross-bridging. Plays a key role in nuclear membrane reformation at the end of mitosis by driving formation of a single nucleus in a spindle-independent manner. Transiently cross-bridges anaphase chromosomes via its ability to bridge distant DNA sites, leading to the formation of a dense chromatin network at the chromosome ensemble surface that limits membranes to the surface. Also acts as a negative regulator of innate immune activation by restricting CGAS activity toward self-DNA upon acute loss of nuclear membrane integrity. Outcompetes CGAS for DNA-binding, thereby preventing CGAS activation and subsequent damaging autoinflammatory responses. Also involved in DNA damage response; acts by inhibiting the ADP-ribosyltransferase activity of PARP1. Involved in the recognition of exogenous dsDNA in the cytosol: associates with exogenous dsDNA immediately after its appearance in the cytosol at endosome breakdown and is required to avoid autophagy. The protein is Barrier-to-autointegration factor B (banf1-b) of Xenopus laevis (African clawed frog).